Consider the following 146-residue polypeptide: D-aminoacyl-tRNA deacylase (146 aa).

Residues 137 to 138 (GP) carry the Gly-cisPro motif, important for rejection of L-amino acids motif.

The protein belongs to the DTD family. In terms of assembly, homodimer.

The protein localises to the cytoplasm. The enzyme catalyses glycyl-tRNA(Ala) + H2O = tRNA(Ala) + glycine + H(+). It carries out the reaction a D-aminoacyl-tRNA + H2O = a tRNA + a D-alpha-amino acid + H(+). In terms of biological role, an aminoacyl-tRNA editing enzyme that deacylates mischarged D-aminoacyl-tRNAs. Also deacylates mischarged glycyl-tRNA(Ala), protecting cells against glycine mischarging by AlaRS. Acts via tRNA-based rather than protein-based catalysis; rejects L-amino acids rather than detecting D-amino acids in the active site. By recycling D-aminoacyl-tRNA to D-amino acids and free tRNA molecules, this enzyme counteracts the toxicity associated with the formation of D-aminoacyl-tRNA entities in vivo and helps enforce protein L-homochirality. This is D-aminoacyl-tRNA deacylase from Halalkalibacterium halodurans (strain ATCC BAA-125 / DSM 18197 / FERM 7344 / JCM 9153 / C-125) (Bacillus halodurans).